A 378-amino-acid polypeptide reads, in one-letter code: Homoserine O-acetyltransferase (378 aa).

An AB hydrolase-1 domain is found at 54-355 (NAILVCHALS…NNPAGHDSFL (302 aa)). Catalysis depends on Ser-159, which acts as the Nucleophile. Residue Arg-228 participates in substrate binding. Residues Asp-318 and His-351 contribute to the active site. Asp-352 is a binding site for substrate.

Belongs to the AB hydrolase superfamily. MetX family. Homodimer.

The protein resides in the cytoplasm. The enzyme catalyses L-homoserine + acetyl-CoA = O-acetyl-L-homoserine + CoA. The protein operates within amino-acid biosynthesis; L-methionine biosynthesis via de novo pathway; O-acetyl-L-homoserine from L-homoserine: step 1/1. In terms of biological role, transfers an acetyl group from acetyl-CoA to L-homoserine, forming acetyl-L-homoserine. The chain is Homoserine O-acetyltransferase from Leptospira biflexa serovar Patoc (strain Patoc 1 / Ames).